We begin with the raw amino-acid sequence, 271 residues long: Mitochondrial distribution and morphology protein 12 (271 aa).

The region spanning 1–267 (MSFDINWSTL…WPSWINLDFN (267 aa)) is the SMP-LTD domain. A Glycyl lysine isopeptide (Lys-Gly) (interchain with G-Cter in ubiquitin) cross-link involves residue Lys-49.

The protein belongs to the MDM12 family. In terms of assembly, component of the ER-mitochondria encounter structure (ERMES) or MDM complex, composed of MMM1, MDM10, MDM12 and MDM34. An MMM1 homodimer associates with one molecule of MDM12 on each side in a pairwise head-to-tail manner, and the SMP-LTD domains of MMM1 and MDM12 generate a continuous hydrophobic tunnel for phospholipid trafficking. Interacts with PUF3.

The protein resides in the mitochondrion outer membrane. It localises to the endoplasmic reticulum membrane. In terms of biological role, component of the ERMES/MDM complex, which serves as a molecular tether to connect the endoplasmic reticulum (ER) and mitochondria. Components of this complex are involved in the control of mitochondrial shape and protein biogenesis, and function in nonvesicular lipid trafficking between the ER and mitochondria. MDM12 is required for the interaction of the ER-resident membrane protein MMM1 and the outer mitochondrial membrane-resident beta-barrel protein MDM10. The MDM12-MMM1 subcomplex functions in the major beta-barrel assembly pathway that is responsible for biogenesis of all mitochondrial outer membrane beta-barrel proteins, and acts in a late step after the SAM complex. The MDM10-MDM12-MMM1 subcomplex further acts in the TOM40-specific pathway after the action of the MDM12-MMM1 complex. Essential for establishing and maintaining the structure of mitochondria and maintenance of mtDNA nucleoids. The sequence is that of Mitochondrial distribution and morphology protein 12 from Saccharomyces cerevisiae (strain AWRI1631) (Baker's yeast).